A 320-amino-acid chain; its full sequence is Malate dehydrogenase (320 aa).

Residues 8–13 (GAGQIG) and aspartate 33 contribute to the NAD(+) site. 2 residues coordinate substrate: arginine 82 and arginine 88. NAD(+)-binding positions include asparagine 95 and 118-120 (ITN). 2 residues coordinate substrate: asparagine 120 and arginine 151. The Proton acceptor role is filled by histidine 175.

This sequence belongs to the LDH/MDH superfamily. MDH type 3 family.

The catalysed reaction is (S)-malate + NAD(+) = oxaloacetate + NADH + H(+). In terms of biological role, catalyzes the reversible oxidation of malate to oxaloacetate. In Pelagibacter ubique (strain HTCC1062), this protein is Malate dehydrogenase.